The following is a 320-amino-acid chain: Probable arabinan endo-1,5-alpha-L-arabinosidase C (320 aa).

The first 16 residues, Met-1–Ala-16, serve as a signal peptide directing secretion. Asp-31 (proton acceptor) is an active-site residue. Residues Asn-73, Asn-137, and Asn-191 are each glycosylated (N-linked (GlcNAc...) asparagine). Residue Glu-199 is the Proton donor of the active site.

Belongs to the glycosyl hydrolase 43 family.

Its subcellular location is the secreted. It catalyses the reaction Endohydrolysis of (1-&gt;5)-alpha-arabinofuranosidic linkages in (1-&gt;5)-arabinans.. Its pathway is glycan metabolism; L-arabinan degradation. In terms of biological role, endo-1,5-alpha-L-arabinanase involved in degradation of pectin. Its preferred substrate is linear 1,5-alpha-L-arabinan. The polypeptide is Probable arabinan endo-1,5-alpha-L-arabinosidase C (abnC) (Aspergillus terreus (strain NIH 2624 / FGSC A1156)).